We begin with the raw amino-acid sequence, 506 residues long: Cobyric acid synthase (506 aa).

One can recognise a GATase cobBQ-type domain in the interval 251–448 (DITIAIVQLP…LHGLFDSDAF (198 aa)). Residue cysteine 332 is the Nucleophile of the active site. The active site involves histidine 440.

The protein belongs to the CobB/CobQ family. CobQ subfamily.

It participates in cofactor biosynthesis; adenosylcobalamin biosynthesis. Functionally, catalyzes amidations at positions B, D, E, and G on adenosylcobyrinic A,C-diamide. NH(2) groups are provided by glutamine, and one molecule of ATP is hydrogenolyzed for each amidation. This Salmonella agona (strain SL483) protein is Cobyric acid synthase.